The chain runs to 147 residues: Large ribosomal subunit protein uL15 (147 aa).

The tract at residues 1-59 is disordered; that stretch reads MKLYELKPAPGSKKNRKRVGRGESSGHGKTSTRGHKGQWARSGGGVRPGFEGGQMPLTR. A compositionally biased stretch (gly residues) spans 42–52; sequence SGGGVRPGFEG.

Belongs to the universal ribosomal protein uL15 family. Part of the 50S ribosomal subunit.

Its function is as follows. Binds to the 23S rRNA. In Caldicellulosiruptor bescii (strain ATCC BAA-1888 / DSM 6725 / KCTC 15123 / Z-1320) (Anaerocellum thermophilum), this protein is Large ribosomal subunit protein uL15.